Reading from the N-terminus, the 56-residue chain is Small ribosomal subunit protein uS14 (56 aa).

Residues cysteine 21, cysteine 24, cysteine 39, and cysteine 42 each coordinate Zn(2+).

This sequence belongs to the universal ribosomal protein uS14 family. In terms of assembly, component of the 40S small ribosomal subunit. It depends on Zn(2+) as a cofactor.

The protein resides in the cytoplasm. It is found in the cytosol. Its subcellular location is the rough endoplasmic reticulum. This is Small ribosomal subunit protein uS14 (RpS29) from Scarabaeus laticollis (Scarab dung beetle).